The chain runs to 462 residues: Asparagine--tRNA ligase (462 aa).

The protein belongs to the class-II aminoacyl-tRNA synthetase family. In terms of assembly, homodimer.

It is found in the cytoplasm. The catalysed reaction is tRNA(Asn) + L-asparagine + ATP = L-asparaginyl-tRNA(Asn) + AMP + diphosphate + H(+). This Borrelia garinii subsp. bavariensis (strain ATCC BAA-2496 / DSM 23469 / PBi) (Borreliella bavariensis) protein is Asparagine--tRNA ligase.